The chain runs to 137 residues: Putative pre-16S rRNA nuclease (137 aa).

Belongs to the YqgF nuclease family.

Its subcellular location is the cytoplasm. In terms of biological role, could be a nuclease involved in processing of the 5'-end of pre-16S rRNA. The polypeptide is Putative pre-16S rRNA nuclease (Oceanobacillus iheyensis (strain DSM 14371 / CIP 107618 / JCM 11309 / KCTC 3954 / HTE831)).